The chain runs to 28 residues: Conotoxin Cl9b (28 aa).

2 positions are modified to 4-hydroxyproline: Pro-17 and Pro-28.

Post-translationally, contains 3 disulfide bonds. Expressed by the venom duct.

It localises to the secreted. This Californiconus californicus (California cone) protein is Conotoxin Cl9b.